Consider the following 660-residue polypeptide: Pentatricopeptide repeat-containing protein At4g20090 (660 aa).

PPR repeat units lie at residues 76 to 110, 111 to 141, 147 to 181, 186 to 220, 221 to 255, 256 to 290, 291 to 325, 326 to 360, 361 to 395, 396 to 430, 431 to 465, 466 to 500, 501 to 535, 539 to 573, and 574 to 609; these read GDST…NRVI, IERS…MVDE, SVKS…NMNM, NGLS…KCLP, DGYT…GCSP, SPVI…GCVP, NEVT…KCIP, NDVT…GYHL, NQHI…GCKP, NIVV…GCLP, NAYT…GCSR, NKFC…GIKP, DTVA…EEPK, DVVT…GCDP, and DVIT…LLKR.

The protein belongs to the PPR family. P subfamily.

In terms of biological role, may play a role in embryogenesis. This is Pentatricopeptide repeat-containing protein At4g20090 (EMB1025) from Arabidopsis thaliana (Mouse-ear cress).